Consider the following 312-residue polypeptide: Olfactory receptor 5J2 (312 aa).

At 1–25 (MADDNFTVVTEFILLGLTDHAELKA) the chain is on the extracellular side. N-linked (GlcNAc...) asparagine glycosylation occurs at N5. The chain crosses the membrane as a helical span at residues 26–46 (VLFVVFLVIYAITLLRNLGMI). Over 47-54 (LLIQITSK) the chain is Cytoplasmic. Residues 55–75 (LHTPMYFLLSCLSFVDACYSS) traverse the membrane as a helical segment. The Extracellular portion of the chain corresponds to 76-99 (AIAPKMLVNLLVVKATISFSACMV). Residues C97 and C189 are joined by a disulfide bond. The chain crosses the membrane as a helical span at residues 100–120 (QHLCFGVFITTEGFLLSVMAY). The Cytoplasmic portion of the chain corresponds to 121-139 (DRYVAIVSPLLYTVAMSDR). Residues 140-160 (KCVELVTGSWIGGIVNTLIHT) traverse the membrane as a helical segment. Topologically, residues 161–196 (ISLRRLSFCRLNAVSHFFCDIPSLLKLSCSDTSMNE) are extracellular. The helical transmembrane segment at 197–217 (LLLLTFSGVIAMATFLTVIIS) threads the bilayer. At 218-237 (YIFIAFASLRIHSASGRQQA) the chain is on the cytoplasmic side. Residues 238-258 (FSTCASHLTAVTIFYGTLIFS) traverse the membrane as a helical segment. Residues 259–271 (YIQPSSQYFVEQE) lie on the Extracellular side of the membrane. The helical transmembrane segment at 272–292 (KVVSMFYTLGIPMLNLLIHSL) threads the bilayer. The Cytoplasmic segment spans residues 293–312 (RNKDVKEAVKRAIEMKHFLC).

This sequence belongs to the G-protein coupled receptor 1 family.

Its subcellular location is the cell membrane. Functionally, odorant receptor. In Homo sapiens (Human), this protein is Olfactory receptor 5J2 (OR5J2).